Reading from the N-terminus, the 234-residue chain is Glucosamine-6-phosphate deaminase (234 aa).

Aspartate 62 (proton acceptor; for enolization step) is an active-site residue. Asparagine 128 functions as the For ring-opening step in the catalytic mechanism. The Proton acceptor; for ring-opening step role is filled by histidine 130. The active-site For ring-opening step is the glutamate 135.

It belongs to the glucosamine/galactosamine-6-phosphate isomerase family. NagB subfamily.

The enzyme catalyses alpha-D-glucosamine 6-phosphate + H2O = beta-D-fructose 6-phosphate + NH4(+). It functions in the pathway amino-sugar metabolism; N-acetylneuraminate degradation; D-fructose 6-phosphate from N-acetylneuraminate: step 5/5. Its function is as follows. Catalyzes the reversible isomerization-deamination of glucosamine 6-phosphate (GlcN6P) to form fructose 6-phosphate (Fru6P) and ammonium ion. In Streptococcus pyogenes serotype M49 (strain NZ131), this protein is Glucosamine-6-phosphate deaminase.